The following is a 1159-amino-acid chain: ATP-dependent helicase/deoxyribonuclease subunit B (1159 aa).

Positions 1-401 (MSIRFVYGRS…LLKNWSYESV (401 aa)) constitute a UvrD-like helicase ATP-binding domain. 8–15 (GRSGTGKS) provides a ligand contact to ATP. The UvrD-like helicase C-terminal domain occupies 279–582 (PYRFKGNLEL…NIGDIARIKG (304 aa)). 4 residues coordinate [4Fe-4S] cluster: C787, C1106, C1109, and C1115.

The protein belongs to the helicase family. AddB/RexB type 1 subfamily. As to quaternary structure, heterodimer of AddA and AddB. Mg(2+) is required as a cofactor. The cofactor is [4Fe-4S] cluster.

The heterodimer acts as both an ATP-dependent DNA helicase and an ATP-dependent, dual-direction single-stranded exonuclease. Recognizes the chi site generating a DNA molecule suitable for the initiation of homologous recombination. The AddB subunit has 5' -&gt; 3' nuclease activity but not helicase activity. The sequence is that of ATP-dependent helicase/deoxyribonuclease subunit B from Clostridium beijerinckii (strain ATCC 51743 / NCIMB 8052) (Clostridium acetobutylicum).